Consider the following 521-residue polypeptide: Vang-like protein 2-B (521 aa).

Residues 1 to 18 (MDNDSQYSGYSYKSGQSR) show a composition bias toward low complexity. A disordered region spans residues 1 to 73 (MDNDSQYSGY…RDDNWGETTT (73 aa)). Residues 1–108 (MDNDSQYSGY…AKLDCSRHLG (108 aa)) are Cytoplasmic-facing. Basic residues predominate over residues 19 to 33 (SSRKHRDRRERHRSK). Basic and acidic residues predominate over residues 57 to 67 (ESTRGEDRDDN). A helical transmembrane segment spans residues 109 to 129 (VVIAGALALLSFLTPIAFMLL). The Extracellular segment spans residues 130-147 (PQILWREDLEQCGTACEG). Residues 148–168 (LFISVAFKLLILLLGSWALFF) form a helical membrane-spanning segment. At 169-178 (RRPKAFFPRV) the chain is on the cytoplasmic side. A helical membrane pass occupies residues 179–199 (FVFRALLMVLVFLLVVSYWLF). Topologically, residues 200–218 (YGVRILESRDKNYQGIVQY) are extracellular. The chain crosses the membrane as a helical span at residues 219–239 (AVSLVDALLFVHYLAVVLLEL). Residues 240–521 (RQLQPQFTIK…VMRLQSETSV (282 aa)) are Cytoplasmic-facing. The short motif at 518–521 (ETSV) is the PDZ-binding element.

This sequence belongs to the Vang family. As to quaternary structure, interacts with dvl/dsh. Interacts with prickle3. In terms of tissue distribution, during gastrulation, broadly expressed in the dorsal region in both mesodermal and neural tissues. From the neurula stages, expressed throughout the neural tube. In tailbud stages, expression declines in the anterior notochord but remains strong in the posterior notochord and in the neural tube. Also weakly expressed in the prenephritic region of late tailbud embryos.

The protein localises to the cell membrane. Functionally, has a role in non-canonical Wnt/planar cell polarity (PCP) signaling; can recruit dvl/dsh and prickle from the cytoplasm to the plasma membrane. Acts in a PCP complex to regulate the polarized assembly of fibronectrin on the surface of the mesoderm during gastrulation. Regulates convergent extension in both dorsal mesoderm and neural tissue without affecting cell fate. Regulates neural fold closure during neurulation. May be required for cell surface localization of fzd3 and fzd6 in the inner ear. In Xenopus laevis (African clawed frog), this protein is Vang-like protein 2-B (vangl2-b).